The following is a 303-amino-acid chain: ATP phosphoribosyltransferase (303 aa).

Belongs to the ATP phosphoribosyltransferase family. Long subfamily. Mg(2+) is required as a cofactor.

It is found in the cytoplasm. The enzyme catalyses 1-(5-phospho-beta-D-ribosyl)-ATP + diphosphate = 5-phospho-alpha-D-ribose 1-diphosphate + ATP. It functions in the pathway amino-acid biosynthesis; L-histidine biosynthesis; L-histidine from 5-phospho-alpha-D-ribose 1-diphosphate: step 1/9. Its activity is regulated as follows. Feedback inhibited by histidine. Functionally, catalyzes the condensation of ATP and 5-phosphoribose 1-diphosphate to form N'-(5'-phosphoribosyl)-ATP (PR-ATP). Has a crucial role in the pathway because the rate of histidine biosynthesis seems to be controlled primarily by regulation of HisG enzymatic activity. This is ATP phosphoribosyltransferase from Haemophilus influenzae (strain 86-028NP).